The sequence spans 347 residues: Ceramide very long chain fatty acid hydroxylase scs7 (347 aa).

At 1–156 (MASVTSEKCV…GNFLEPLTKT (156 aa)) the chain is on the cytoplasmic side. The helical transmembrane segment at 157 to 177 (PWYMIPLIWVPCVTYGFLYAC) threads the bilayer. Position 178 (Thr178) is a topological domain, lumenal. A helical membrane pass occupies residues 179 to 199 (GIPFSVAITFFIIGLFTWTLV). Over 200-238 (EYTMHRFLFHLDEYTPDHPIFLTMHFAFHGCHHFLPADK) the chain is Cytoplasmic. Zn(2+) contacts are provided by His204, His209, His228, His231, and His232. The helical transmembrane segment at 239 to 259 (YRLVMPPALFLIFATPWYHFI) threads the bilayer. A topological domain (lumenal) is located at residue Gln260. The chain crosses the membrane as a helical span at residues 261–281 (LVLPHYIGVAGFSGAILGYVF). Topologically, residues 282-347 (YDLTHYFLHH…EQGKISTKAK (66 aa)) are cytoplasmic. Zn(2+) is bound by residues His286, His290, His306, His309, and His310.

This sequence belongs to the sterol desaturase family. SCS7 subfamily. Zn(2+) is required as a cofactor.

Its subcellular location is the endoplasmic reticulum membrane. Its pathway is sphingolipid metabolism. In terms of biological role, ceramide hydroxylase involved in the hydroxylation of sphingolipid-associated very long chain fatty acids. Postulated to hydroxylate the very long chain fatty acid of dihydroceramides and phytoceramides at C-2. The sequence is that of Ceramide very long chain fatty acid hydroxylase scs7 from Schizosaccharomyces pombe (strain 972 / ATCC 24843) (Fission yeast).